A 351-amino-acid polypeptide reads, in one-letter code: AA9 family lytic polysaccharide monooxygenase A (351 aa).

Residue histidine 1 coordinates Cu(2+). Cysteine 52 and cysteine 178 are oxidised to a cystine. Residue asparagine 53 is glycosylated (N-linked (GlcNAc...) asparagine). Histidine 86 lines the Cu(2+) pocket. The N-linked (GlcNAc...) asparagine glycan is linked to asparagine 138. Histidine 164 and glutamine 173 together coordinate O2. Tyrosine 175 serves as a coordination point for Cu(2+). The GPI-anchor amidated serine moiety is linked to residue serine 280. A propeptide spans 281 to 351 (removed in mature form); sequence SAIGTSTASS…RSGTLGRLSF (71 aa).

It belongs to the polysaccharide monooxygenase AA9 family. Cu(2+) is required as a cofactor.

Its subcellular location is the cell membrane. The enzyme catalyses [(1-&gt;4)-beta-D-glucosyl]n+m + reduced acceptor + O2 = 4-dehydro-beta-D-glucosyl-[(1-&gt;4)-beta-D-glucosyl]n-1 + [(1-&gt;4)-beta-D-glucosyl]m + acceptor + H2O.. Functionally, lytic polysaccharide monooxygenase (LPMO) that depolymerizes crystalline and amorphous polysaccharides via the oxidation of scissile alpha- or beta-(1-4)-glycosidic bonds, yielding C1 or C4 oxidation products. Catalysis by LPMOs requires the reduction of the active-site copper from Cu(II) to Cu(I) by a reducing agent and H(2)O(2) or O(2) as a cosubstrate. Its function is as follows. Has broad specificity, cleaving at any position along the beta-glucan backbone of xyloglucan, regardless of substitutions. Shows minor activity on glucomannan. The chain is AA9 family lytic polysaccharide monooxygenase A from Gloeophyllum trabeum (Brown rot fungus).